The chain runs to 139 residues: Putative truncated protein trichome birefringence-like 46 (139 aa).

It belongs to the PC-esterase family. TBL subfamily.

This is Putative truncated protein trichome birefringence-like 46 (TBL46) from Arabidopsis thaliana (Mouse-ear cress).